The chain runs to 180 residues: Progesterone receptor (180 aa).

The segment at 1–11 (KNCPACRLRKC) adopts an NR C4-type zinc-finger fold. The segment at residues 1–16 (KNCPACRLRKCCQAGM) is a DNA-binding region (nuclear receptor). At serine 60 the chain carries Phosphoserine. Residues 63 to 180 (QEIQLFPPLI…QRMKESSFYS (118 aa)) form the NR LBD domain. The tract at residues 71 to 180 (LINLLLSIEP…QRMKESSFYS (110 aa)) is AF2; mediates transcriptional activation. Arginine 150 is a progesterone binding site.

It belongs to the nuclear hormone receptor family. NR3 subfamily. Interacts with SMARD1 and UNC45A. Interacts with CUEDC2; the interaction promotes ubiquitination, decreases sumoylation, and represses transcriptional activity. Interacts with PIAS3; the interaction promotes sumoylation of PR in a hormone-dependent manner, inhibits DNA-binding, and alters nuclear export. Interacts with SP1; the interaction requires ligand-induced phosphorylation by ERK1/2-MAPK. Interacts with PRMT2. Interacts with NCOA2 and NCOA1. Interacts with KLF9. Interacts with GTF2B. In terms of processing, phosphorylated on multiple serine sites. Several of these sites are hormone-dependent. Sumoylation is hormone-dependent and represses transcriptional activity. Sumoylation on all three sites is enhanced by PIAS3. Desumoylated by SENP1. Sumoylation is repressed by ubiquitination and modulated by phosphorylation. Post-translationally, ubiquitination is hormone-dependent and represses sumoylation. In terms of processing, palmitoylated by ZDHHC7 and ZDHHC21. Palmitoylation is required for plasma membrane targeting and for rapid intracellular signaling via ERK and AKT kinases and cAMP generation.

The protein localises to the nucleus. The protein resides in the cytoplasm. Its function is as follows. The steroid hormones and their receptors are involved in the regulation of eukaryotic gene expression and affect cellular proliferation and differentiation in target tissues. Transcriptional activator of several progesteron-dependent promoters in a variety of cell types. Involved in activation of SRC-dependent MAPK signaling on hormone stimulation. The protein is Progesterone receptor (PGR) of Notamacropus eugenii (Tammar wallaby).